We begin with the raw amino-acid sequence, 165 residues long: Nucleotide-binding protein Rcas_1283 (165 aa).

The protein belongs to the YajQ family.

Nucleotide-binding protein. The polypeptide is Nucleotide-binding protein Rcas_1283 (Roseiflexus castenholzii (strain DSM 13941 / HLO8)).